The primary structure comprises 251 residues: MDPKIKIRGVNFFYHKHQVLKNINMDFPERQITAIIGPSGCGKSTLLRALNRMNDIVSGARLEGAVLLDNENIYSPNLDVVNLRKRVGMVFQQPNPFPKSIFDNVAFGPRMLGTTVQSRLDEVVEKSLRQAALWDEVKDNLHKSGLALSGGQQQRLCIARVLAIEPEVILMDEPCSALDPVSTMRIEELMQELKQNYTIAIVTHNMQQAARASDWTGFLLTGDLVEYGRTGEIFSRPRDKRTEDYITGRFG.

An ABC transporter domain is found at 5-246 (IKIRGVNFFY…PRDKRTEDYI (242 aa)). 37-44 (GPSGCGKS) provides a ligand contact to ATP.

This sequence belongs to the ABC transporter superfamily. Phosphate importer (TC 3.A.1.7) family. In terms of assembly, the complex is composed of two ATP-binding proteins (PstB), two transmembrane proteins (PstC and PstA) and a solute-binding protein (PstS).

The protein localises to the cell membrane. It catalyses the reaction phosphate(out) + ATP + H2O = ADP + 2 phosphate(in) + H(+). In terms of biological role, part of the ABC transporter complex PstSACB involved in phosphate import. Responsible for energy coupling to the transport system. This Dehalococcoides mccartyi (strain CBDB1) protein is Phosphate import ATP-binding protein PstB.